A 942-amino-acid polypeptide reads, in one-letter code: Nuclear receptor coactivator 7 (942 aa).

Met-1 bears the N-acetylmethionine mark. Residues 1-12 (MDTKEEKKERKQ) show a composition bias toward basic and acidic residues. The tract at residues 1–46 (MDTKEEKKERKQSYFARLKKKKQAKQNAETASAVATRTHTGKEDNN) is disordered. Residues 4–29 (KEEKKERKQSYFARLKKKKQAKQNAE) adopt a coiled-coil conformation. Positions 25–38 (KQNAETASAVATRT) are enriched in polar residues. Phosphoserine is present on Ser-89. Residues 114-157 (MEYTAGNQDTLNSIALKFNITPNKLVELNKLFTHTIVPGQVLFV) form the LysM domain. Thr-134 is subject to Phosphothreonine. A disordered region spans residues 161-188 (NSPSSTLRLSSSSPGATVSPSSSDAEYD). Low complexity predominate over residues 162–183 (SPSSTLRLSSSSPGATVSPSSS). Phosphoserine occurs at positions 179, 183, 208, 209, and 211. The interval 324 to 416 (KFKSINKEKR…ENFLGEDDDF (93 aa)) is disordered. Residues 356–368 (GHTPTKPSGSSVS) are compositionally biased toward polar residues. A compositionally biased stretch (basic and acidic residues) spans 369 to 381 (EKLKKLDSSRETS). 3 positions are modified to phosphoserine: Ser-441, Ser-500, and Ser-502. In terms of domain architecture, TLDc spans 781–942 (ALLENMHIEQ…VQDLEVWAFD (162 aa)).

It belongs to the OXR1 family. Interacts with ESR1, ESR2A, ESR2B, THRB, PPARG and RARA in a ligand-inducible manner. Interacts with the heterodimer AHR-ARNT. In terms of tissue distribution, highly expressed in brain. Weakly expressed in mammary gland, ovary, uterus, prostate, stomach, bladder, spinal cord and pancreas. Expressed in cancer cell line.

The protein resides in the nucleus. Functionally, enhances the transcriptional activities of several nuclear receptors. Involved in the coactivation of different nuclear receptors, such as ESR1, THRB, PPARG and RARA. The protein is Nuclear receptor coactivator 7 (NCOA7) of Homo sapiens (Human).